Here is a 319-residue protein sequence, read N- to C-terminus: tRNA (guanine(9)-N(1))-methyltransferase Trmt10A (319 aa).

Disordered stretches follow at residues 16–87 (LSLN…KRQL) and 275–319 (AKIT…SLDS). The span at 17 to 33 (SLNNCPGTTPGTPMSKN) shows a compositional bias: polar residues. Residues 35-42 (LKKQRKLA) carry the Nuclear localization signal motif. 3 stretches are compositionally biased toward basic and acidic residues: residues 40–58 (KLAEFAELRKLRREREREK), 78–87 (SRKELKKRQL), and 276–302 (KITDKKEPNHCLEQQDEKQKQEAESDK). A coiled-coil region spans residues 44–67 (FAELRKLRREREREKKKQKRREAK). The SAM-dependent MTase TRM10-type domain maps to 83-274 (KKRQLADGGK…ETIPMRKGAK (192 aa)).

It belongs to the class IV-like SAM-binding methyltransferase superfamily. TRM10 family.

The protein localises to the nucleus. It localises to the nucleolus. Its subcellular location is the chromosome. The enzyme catalyses guanosine(9) in tRNA + S-adenosyl-L-methionine = N(1)-methylguanosine(9) in tRNA + S-adenosyl-L-homocysteine + H(+). Its function is as follows. S-adenosyl-L-methionine-dependent guanine N(1)-methyltransferase that catalyzes the formation of N(1)-methylguanine at position 9 (m1G9) in tRNAs. Modulates Mettl3-mediated N6-methyladenosine (m6A) methylation of mRNA 5'-UTRs and 3'-UTRs independent of its methyltransferase activity; influences mRNA stability and protein levels, in particular of Hsp70 chaperone proteins and other stress response proteins. Also regulates stability of transcripts encoding proteins involved in signaling processes and proteins involved in neurogenesis and axon guidance pathways. The protein is tRNA (guanine(9)-N(1))-methyltransferase Trmt10A of Drosophila melanogaster (Fruit fly).